Consider the following 481-residue polypeptide: MPSPTVTSPQVAVNDIGSSEDFLAAIDKTIKYFNDGDIVEGTIVKVDRDEVLLDIGYKTEGVIPARELSIKHDVDPNEVVSVGDEVEALVLTKEDKEGRLILSKKRAQYERAWGTIEALKEKDEAVKGTVIEVVKGGLILDIGLRGFLPASLVEMRRVRDLQPYIGKEIEAKIIELDKNRNNVVLSRRAWLEQTQSEVRSEFLNNLQKGTIRKGVVSSIVNFGAFVDLGGVDGLVHVSELSWKHIDHPSEVVQVGDEVTVEVLDVDMDRERVSLSLKATQEDPWRHFARTHAIGQIVPGKVTKLVPFGAFVRVEEGIEGLVHISELAERHVEVPDQVVAVGDDAMVKVIDIDLERRRISLSLKQANEDYTEEFDPAKYGMADSYDEQGNYIFPEGFDAETNEWLEGFEKQRAEWEARYAEAERRHKMHTAQMEKFAAAEAAGRGADDQSSASSAPSEKTAGGSLASDAQLAALREKLAGSA.

4 S1 motif domains span residues 36 to 105 (GDIV…LSKK), 123 to 188 (DEAV…LSRR), 209 to 277 (GTIR…LSLK), and 294 to 363 (GQIV…LSLK). The disordered stretch occupies residues 429-467 (TAQMEKFAAAEAAGRGADDQSSASSAPSEKTAGGSLASD). A compositionally biased stretch (low complexity) spans 437–456 (AAEAAGRGADDQSSASSAPS).

The protein belongs to the bacterial ribosomal protein bS1 family.

Its function is as follows. Binds mRNA; thus facilitating recognition of the initiation point. It is needed to translate mRNA with a short Shine-Dalgarno (SD) purine-rich sequence. In Mycobacterium tuberculosis (strain CDC 1551 / Oshkosh), this protein is Small ribosomal subunit protein bS1 (rpsA).